Here is a 110-residue protein sequence, read N- to C-terminus: MEAKAKLRYVRLSPRKTRLVVDMVRGKKVQEALNILRFSPQKAASIVYQLVGSAVANAEQKGVADVDRLFIESISVDQGPVLKRFMPRAQGRATRIRKPTSHITVVLNEK.

This sequence belongs to the universal ribosomal protein uL22 family. In terms of assembly, part of the 50S ribosomal subunit.

In terms of biological role, this protein binds specifically to 23S rRNA; its binding is stimulated by other ribosomal proteins, e.g. L4, L17, and L20. It is important during the early stages of 50S assembly. It makes multiple contacts with different domains of the 23S rRNA in the assembled 50S subunit and ribosome. Functionally, the globular domain of the protein is located near the polypeptide exit tunnel on the outside of the subunit, while an extended beta-hairpin is found that lines the wall of the exit tunnel in the center of the 70S ribosome. The chain is Large ribosomal subunit protein uL22 from Syntrophotalea carbinolica (strain DSM 2380 / NBRC 103641 / GraBd1) (Pelobacter carbinolicus).